The following is a 401-amino-acid chain: Imidazolonepropionase (401 aa).

Fe(3+) is bound by residues His-66 and His-68. 2 residues coordinate Zn(2+): His-66 and His-68. 4-imidazolone-5-propanoate contacts are provided by Arg-75, Tyr-138, and His-171. An N-formimidoyl-L-glutamate-binding site is contributed by Tyr-138. Fe(3+) is bound at residue His-236. A Zn(2+)-binding site is contributed by His-236. Gln-239 lines the 4-imidazolone-5-propanoate pocket. Asp-311 is a Fe(3+) binding site. Asp-311 lines the Zn(2+) pocket. Positions 313 and 315 each coordinate N-formimidoyl-L-glutamate. Thr-316 serves as a coordination point for 4-imidazolone-5-propanoate.

Belongs to the metallo-dependent hydrolases superfamily. HutI family. Requires Zn(2+) as cofactor. Fe(3+) serves as cofactor.

Its subcellular location is the cytoplasm. The catalysed reaction is 4-imidazolone-5-propanoate + H2O = N-formimidoyl-L-glutamate. It participates in amino-acid degradation; L-histidine degradation into L-glutamate; N-formimidoyl-L-glutamate from L-histidine: step 3/3. In terms of biological role, catalyzes the hydrolytic cleavage of the carbon-nitrogen bond in imidazolone-5-propanoate to yield N-formimidoyl-L-glutamate. It is the third step in the universal histidine degradation pathway. This Pseudomonas putida (strain ATCC 47054 / DSM 6125 / CFBP 8728 / NCIMB 11950 / KT2440) protein is Imidazolonepropionase.